A 951-amino-acid chain; its full sequence is Exportin-2 (951 aa).

Residues 29-104 (ATSKIQKFVK…KSLLLNFILS (76 aa)) enclose the Importin N-terminal domain.

This sequence belongs to the XPO2/CSE1 family.

The protein localises to the cytoplasm. The protein resides in the nucleus. Export receptor for importin alpha. Mediates importin-alpha re-export from the nucleus to the cytoplasm after import substrates have been released into the nucleoplasm. The protein is Exportin-2 (xpo2) of Dictyostelium discoideum (Social amoeba).